A 264-amino-acid chain; its full sequence is Ribonuclease HII (264 aa).

The RNase H type-2 domain maps to 69–263 (KVVCGIDEVG…EENAKTITKP (195 aa)). Residues aspartate 75, glutamate 76, and aspartate 166 each coordinate a divalent metal cation.

It belongs to the RNase HII family. It depends on Mn(2+) as a cofactor. Mg(2+) is required as a cofactor.

The protein resides in the cytoplasm. It carries out the reaction Endonucleolytic cleavage to 5'-phosphomonoester.. Its function is as follows. Endonuclease that specifically degrades the RNA of RNA-DNA hybrids. This chain is Ribonuclease HII, found in Macrococcus caseolyticus (strain JCSC5402) (Macrococcoides caseolyticum).